A 148-amino-acid polypeptide reads, in one-letter code: Large ribosomal subunit protein bL9 (148 aa).

This sequence belongs to the bacterial ribosomal protein bL9 family.

Functionally, binds to the 23S rRNA. In Pseudomonas fluorescens (strain ATCC BAA-477 / NRRL B-23932 / Pf-5), this protein is Large ribosomal subunit protein bL9.